The sequence spans 193 residues: Phosphoheptose isomerase (193 aa).

In terms of domain architecture, SIS spans 37–193 (LADSFKAGGK…MLIEKEMAKG (157 aa)). 52 to 54 (NGG) serves as a coordination point for substrate. Zn(2+) contacts are provided by histidine 61 and glutamate 65. Substrate is bound by residues glutamate 65, 93–94 (ND), 119–121 (STS), serine 124, and glutamine 172. Zn(2+) contacts are provided by glutamine 172 and histidine 180.

The protein belongs to the SIS family. GmhA subfamily. As to quaternary structure, homotetramer. Zn(2+) serves as cofactor.

Its subcellular location is the cytoplasm. It carries out the reaction 2 D-sedoheptulose 7-phosphate = D-glycero-alpha-D-manno-heptose 7-phosphate + D-glycero-beta-D-manno-heptose 7-phosphate. Its pathway is carbohydrate biosynthesis; D-glycero-D-manno-heptose 7-phosphate biosynthesis; D-glycero-alpha-D-manno-heptose 7-phosphate and D-glycero-beta-D-manno-heptose 7-phosphate from sedoheptulose 7-phosphate: step 1/1. Its function is as follows. Catalyzes the isomerization of sedoheptulose 7-phosphate in D-glycero-D-manno-heptose 7-phosphate. In Klebsiella pneumoniae subsp. pneumoniae (strain ATCC 700721 / MGH 78578), this protein is Phosphoheptose isomerase.